Here is a 606-residue protein sequence, read N- to C-terminus: Glutamine--fructose-6-phosphate aminotransferase [isomerizing] (606 aa).

Cys-2 serves as the catalytic Nucleophile; for GATase activity. Positions 2–218 (CGIFGYLGQR…SGELAVLRIG (217 aa)) constitute a Glutamine amidotransferase type-2 domain. SIS domains lie at 278-424 (FAES…QRQE) and 455-596 (WRCR…VDRP). Residue Lys-601 is the For Fru-6P isomerization activity of the active site.

Homodimer.

It localises to the cytoplasm. The enzyme catalyses D-fructose 6-phosphate + L-glutamine = D-glucosamine 6-phosphate + L-glutamate. Catalyzes the first step in hexosamine metabolism, converting fructose-6P into glucosamine-6P using glutamine as a nitrogen source. The chain is Glutamine--fructose-6-phosphate aminotransferase [isomerizing] from Chlamydia muridarum (strain MoPn / Nigg).